The following is a 373-amino-acid chain: Dual-specificity RNA methyltransferase RlmN (373 aa).

Glutamate 94 functions as the Proton acceptor in the catalytic mechanism. The Radical SAM core domain maps to 100–339 (EADRATLCVS…VIVRKTRGDD (240 aa)). Cysteine 107 and cysteine 344 are disulfide-bonded. [4Fe-4S] cluster-binding residues include cysteine 114, cysteine 118, and cysteine 121. S-adenosyl-L-methionine is bound by residues 168-169 (GE), serine 200, 222-224 (SLH), and asparagine 301. Cysteine 344 acts as the S-methylcysteine intermediate in catalysis.

This sequence belongs to the radical SAM superfamily. RlmN family. The cofactor is [4Fe-4S] cluster.

It localises to the cytoplasm. It catalyses the reaction adenosine(2503) in 23S rRNA + 2 reduced [2Fe-2S]-[ferredoxin] + 2 S-adenosyl-L-methionine = 2-methyladenosine(2503) in 23S rRNA + 5'-deoxyadenosine + L-methionine + 2 oxidized [2Fe-2S]-[ferredoxin] + S-adenosyl-L-homocysteine. The catalysed reaction is adenosine(37) in tRNA + 2 reduced [2Fe-2S]-[ferredoxin] + 2 S-adenosyl-L-methionine = 2-methyladenosine(37) in tRNA + 5'-deoxyadenosine + L-methionine + 2 oxidized [2Fe-2S]-[ferredoxin] + S-adenosyl-L-homocysteine. Specifically methylates position 2 of adenine 2503 in 23S rRNA and position 2 of adenine 37 in tRNAs. m2A2503 modification seems to play a crucial role in the proofreading step occurring at the peptidyl transferase center and thus would serve to optimize ribosomal fidelity. The chain is Dual-specificity RNA methyltransferase RlmN from Tolumonas auensis (strain DSM 9187 / NBRC 110442 / TA 4).